Reading from the N-terminus, the 304-residue chain is E3 ubiquitin-protein ligase RNF115 (304 aa).

Residue A2 is modified to N-acetylalanine. The interval 95-138 (PLDQDNRANERGHQTHTDFWGARPPRLPLGRRYRSRGSSRPDRS) is disordered. The segment covering 98-110 (QDNRANERGHQTH) has biased composition (basic and acidic residues). Phosphoserine; by PKB/AKT1 is present on residues S132 and S133. Residues 228–269 (CPVCKEDYTVEEEVRQLPCNHFFHSSCIVPWLELHDTCPVCR) form an RING-type zinc finger. A disordered region spans residues 272 to 304 (LNGEDSTRQSQSTEASASNRFSNDSQLHDRWTF). Residues 279-296 (RQSQSTEASASNRFSNDS) are compositionally biased toward polar residues.

Interacts with RAB7A. Interacts with EGFR and FLT3. Interacts with BST2. Interacts with STX17. Interacts with YWHAE. In terms of processing, phosphorylated by AKT1, allowing association with the 14-3-3 chaperones that facilitates associating with TLRs. Post-translationally, RING-type zinc finger-dependent and E2-dependent autoubiquitination. Deubiquitinated by USP9X; antogonizing its autoubiquitination and subsequent proteasomal degradation. In terms of tissue distribution, expressed at extremely low levels in normal breast, prostate, lung, colon. Higher levels of expression are detected in heart, skeletal muscle, testis as well as in breast and prostate cancer cells.

Its subcellular location is the cytoplasm. The protein resides in the nucleus. It is found in the endoplasmic reticulum. It localises to the golgi apparatus. The catalysed reaction is S-ubiquitinyl-[E2 ubiquitin-conjugating enzyme]-L-cysteine + [acceptor protein]-L-lysine = [E2 ubiquitin-conjugating enzyme]-L-cysteine + N(6)-ubiquitinyl-[acceptor protein]-L-lysine.. The protein operates within protein modification; protein ubiquitination. In terms of biological role, E3 ubiquitin-protein ligase that catalyzes the 'Lys-48'- and/or 'Lys-63'-linked polyubiquitination of various substrates and thereby plays a role in a number of signaling pathways including autophagy, innate immunity, cell proliferation and cell death. Plays a role in the endosomal trafficking and degradation of membrane receptors including EGFR, FLT3, MET and CXCR4 through their polyubiquitination. Participates together with BST2 in antiviral immunity by facilitating the internalization of HIV-1 virions into intracellular vesicles leading to their lysosomal degradation. Also possesses an antiviral activity independently of BST2 by promoting retroviral GAG proteins ubiquitination, redistribution to endo-lysosomal compartments and, ultimately, lysosomal degradation. Catalyzes distinct types of ubiquitination on MAVS and STING1 at different phases of viral infection to promote innate antiviral response. Mediates the 'Lys-48'-linked ubiquitination of MAVS leading to its proteasomal degradation and ubiquitinates STING1 via 'Lys-63'-linked polyubiquitination, critical for its oligomerization and the subsequent recruitment of TBK1. Plays a positive role in the autophagosome-lysosome fusion by interacting with STX17 and enhancing its stability without affecting 'Lys-48'- or 'Lys-63'-linked polyubiquitination levels, which in turn promotes autophagosome maturation. Negatively regulates TLR-induced expression of proinflammatory cytokines by catalyzing 'Lys-11'-linked ubiquitination of RAB1A and RAB13 to inhibit post-ER trafficking of TLRs to the Golgi by RAB1A and subsequently from the Golgi apparatus to the cell surface by RAB13. The sequence is that of E3 ubiquitin-protein ligase RNF115 from Homo sapiens (Human).